The chain runs to 158 residues: Xanthine-guanine phosphoribosyltransferase (158 aa).

Residues 38-39 and 90-98 each bind 5-phospho-alpha-D-ribose 1-diphosphate; these read RG and DDLVDTGGT. Residue Asp-91 coordinates Mg(2+). 2 residues coordinate guanine: Asp-94 and Ile-137. Positions 94 and 137 each coordinate xanthine. GMP-binding positions include 94–98 and 136–137; these read DTGGT and WI.

The protein belongs to the purine/pyrimidine phosphoribosyltransferase family. XGPT subfamily. Homotetramer. Mg(2+) serves as cofactor.

The protein resides in the cell inner membrane. The enzyme catalyses GMP + diphosphate = guanine + 5-phospho-alpha-D-ribose 1-diphosphate. It carries out the reaction XMP + diphosphate = xanthine + 5-phospho-alpha-D-ribose 1-diphosphate. It catalyses the reaction IMP + diphosphate = hypoxanthine + 5-phospho-alpha-D-ribose 1-diphosphate. Its pathway is purine metabolism; GMP biosynthesis via salvage pathway; GMP from guanine: step 1/1. It functions in the pathway purine metabolism; XMP biosynthesis via salvage pathway; XMP from xanthine: step 1/1. Functionally, purine salvage pathway enzyme that catalyzes the transfer of the ribosyl-5-phosphate group from 5-phospho-alpha-D-ribose 1-diphosphate (PRPP) to the N9 position of the 6-oxopurines guanine and xanthine to form the corresponding ribonucleotides GMP (guanosine 5'-monophosphate) and XMP (xanthosine 5'-monophosphate), with the release of PPi. To a lesser extent, also acts on hypoxanthine. The protein is Xanthine-guanine phosphoribosyltransferase of Buchnera aphidicola subsp. Acyrthosiphon pisum (strain APS) (Acyrthosiphon pisum symbiotic bacterium).